Reading from the N-terminus, the 556-residue chain is CDP-diacylglycerol--glycerol-3-phosphate 3-phosphatidyltransferase, mitochondrial (556 aa).

Residues 1–28 (MAAAAAAAAGPVFWRRLLGLLPGRPGLA) constitute a mitochondrion transit peptide. At Ser-49 the chain carries Phosphoserine. Position 124-131 (124-131 (ASLYLGIG)) interacts with ATP. 2 PLD phosphodiesterase domains span residues 215 to 241 (TIGLQHIKVYLFDNNVILSGANLSDSY) and 419 to 457 (FGAKGVAGAIPAAYVHIERQFYSEVCSLGQQERVQLQEY). Active-site residues include His-220, Lys-222, and Asp-227.

This sequence belongs to the CDP-alcohol phosphatidyltransferase class-II family.

The protein localises to the mitochondrion. The catalysed reaction is a CDP-1,2-diacyl-sn-glycerol + sn-glycerol 3-phosphate = a 1,2-diacyl-sn-glycero-3-phospho-(1'-sn-glycero-3'-phosphate) + CMP + H(+). It functions in the pathway phospholipid metabolism; phosphatidylglycerol biosynthesis; phosphatidylglycerol from CDP-diacylglycerol: step 1/2. With respect to regulation, activated by calcium and magnesium and inhibited by other bivalent cations. Its function is as follows. Functions in the biosynthesis of the anionic phospholipids phosphatidylglycerol and cardiolipin. This is CDP-diacylglycerol--glycerol-3-phosphate 3-phosphatidyltransferase, mitochondrial (PGS1) from Bos taurus (Bovine).